We begin with the raw amino-acid sequence, 261 residues long: Glucosamine-6-phosphate deaminase (261 aa).

The active-site Proton acceptor; for enolization step is Asp67. Catalysis depends on Asn135, which acts as the For ring-opening step. His137 acts as the Proton acceptor; for ring-opening step in catalysis. Catalysis depends on Glu142, which acts as the For ring-opening step.

Belongs to the glucosamine/galactosamine-6-phosphate isomerase family. NagB subfamily. As to quaternary structure, homohexamer.

It carries out the reaction alpha-D-glucosamine 6-phosphate + H2O = beta-D-fructose 6-phosphate + NH4(+). It participates in amino-sugar metabolism; N-acetylneuraminate degradation; D-fructose 6-phosphate from N-acetylneuraminate: step 5/5. In terms of biological role, catalyzes the reversible isomerization-deamination of glucosamine 6-phosphate (GlcN6P) to form fructose 6-phosphate (Fru6P) and ammonium ion. The protein is Glucosamine-6-phosphate deaminase of Hahella chejuensis (strain KCTC 2396).